We begin with the raw amino-acid sequence, 300 residues long: Hydroxyquinol 1,2-dioxygenase (300 aa).

4 residues coordinate Fe cation: tyrosine 167, tyrosine 200, histidine 224, and histidine 226.

Belongs to the intradiol ring-cleavage dioxygenase family. Fe(3+) serves as cofactor.

The catalysed reaction is benzene-1,2,4-triol + O2 = maleylacetate + 2 H(+). Its pathway is aromatic compound metabolism. It participates in xenobiotic degradation. Functionally, involved in the degradation of para-nitrophenol (4-NP). Catalyzes the conversion of hydroxyquinol to malelylacetate. This chain is Hydroxyquinol 1,2-dioxygenase (npcC), found in Rhodococcus opacus (Nocardia opaca).